Here is a 351-residue protein sequence, read N- to C-terminus: Large ribosomal subunit protein uL3 (351 aa).

2 disordered regions span residues 1–31 (MGHR…TPRT) and 246–271 (KGSR…GQLG).

This sequence belongs to the universal ribosomal protein uL3 family. As to quaternary structure, part of the 50S ribosomal subunit. Forms a cluster with proteins L14 and L24e.

One of the primary rRNA binding proteins, it binds directly near the 3'-end of the 23S rRNA, where it nucleates assembly of the 50S subunit. The polypeptide is Large ribosomal subunit protein uL3 (Saccharolobus islandicus (strain M.14.25 / Kamchatka #1) (Sulfolobus islandicus)).